A 428-amino-acid chain; its full sequence is Histidine--tRNA ligase (428 aa).

It belongs to the class-II aminoacyl-tRNA synthetase family. Homodimer.

It is found in the cytoplasm. It catalyses the reaction tRNA(His) + L-histidine + ATP = L-histidyl-tRNA(His) + AMP + diphosphate + H(+). This chain is Histidine--tRNA ligase, found in Halalkalibacterium halodurans (strain ATCC BAA-125 / DSM 18197 / FERM 7344 / JCM 9153 / C-125) (Bacillus halodurans).